The following is a 103-amino-acid chain: Pyrimidine/purine nucleoside phosphorylase (103 aa).

It belongs to the nucleoside phosphorylase PpnP family.

It carries out the reaction a purine D-ribonucleoside + phosphate = a purine nucleobase + alpha-D-ribose 1-phosphate. It catalyses the reaction adenosine + phosphate = alpha-D-ribose 1-phosphate + adenine. The catalysed reaction is cytidine + phosphate = cytosine + alpha-D-ribose 1-phosphate. The enzyme catalyses guanosine + phosphate = alpha-D-ribose 1-phosphate + guanine. It carries out the reaction inosine + phosphate = alpha-D-ribose 1-phosphate + hypoxanthine. It catalyses the reaction thymidine + phosphate = 2-deoxy-alpha-D-ribose 1-phosphate + thymine. The catalysed reaction is uridine + phosphate = alpha-D-ribose 1-phosphate + uracil. The enzyme catalyses xanthosine + phosphate = alpha-D-ribose 1-phosphate + xanthine. Catalyzes the phosphorolysis of diverse nucleosides, yielding D-ribose 1-phosphate and the respective free bases. Can use uridine, adenosine, guanosine, cytidine, thymidine, inosine and xanthosine as substrates. Also catalyzes the reverse reactions. In Shewanella oneidensis (strain ATCC 700550 / JCM 31522 / CIP 106686 / LMG 19005 / NCIMB 14063 / MR-1), this protein is Pyrimidine/purine nucleoside phosphorylase.